The chain runs to 171 residues: Early E1A protein (171 aa).

The interval 40–48 (PTLHDLFDV) is interaction with RB1 in competition with E2F1. The disordered stretch occupies residues 67–96 (DTDSSASTEGDSGFSPLSTPPVSPIPPHPT). Residues 84-96 (STPPVSPIPPHPT) are compositionally biased toward pro residues. An LXCXE motif, interaction with host RB1 motif is present at residues 106 to 110 (LLCLE). The segment at 145–163 (CLRCAFYQEQDDNALCGLC) is a zinc-finger region. The Nuclear localization signal signature appears at 166–171 (KGPCRR).

This sequence belongs to the adenoviridae E1A protein family. Interacts with host UBE2I; this interaction interferes with polySUMOylation. Interacts with host RB1; this interaction induces the aberrant dissociation of RB1-E2F1 complex thereby disrupting the activity of RB1 and activating E2F1-regulated genes. Interacts with host ATF7; the interaction enhances ATF7-mediated viral transactivation activity which requires the zinc binding domains of both proteins. Isoform early E1A 32 kDa protein and isoform early E1A 26 kDa protein interact (via N-terminus) with CUL1 and E3 ubiquitin ligase RBX1; these interactions inhibit RBX1-CUL1-dependent elongation reaction of ubiquitin chains and attenuate ubiquitination of SCF(FBXW7) target proteins. Interacts (via PXLXP motif) with host ZMYND11/BS69 (via MYND-type zinc finger); this interaction inhibits E1A mediated transactivation. Interacts with host EP300; this interaction stimulates the acetylation of RB1 by recruiting EP300 and RB1 into a multimeric-protein complex. Interacts with host CTBP1 and CTBP2; this interaction seems to potentiate viral replication. Interacts with host DCAF7. Interacts with host DYRK1A. Interacts with host KPNA4; this interaction allows E1A import into the host nucleus. Interacts with host EP400; this interaction stabilizes MYC. Interacts with host TBP protein; this interaction probably disrupts the TBP-TATA complex.

It is found in the host nucleus. Its function is as follows. Plays a role in viral genome replication by driving entry of quiescent cells into the cell cycle. Stimulation of progression from G1 to S phase allows the virus to efficiently use the cellular DNA replicating machinery to achieve viral genome replication. E1A protein has both transforming and trans-activating activities. Induces the disassembly of the E2F1 transcription factor from RB1 by direct competition for the same binding site on RB1, with subsequent transcriptional activation of E2F1-regulated S-phase genes and of the E2 region of the adenoviral genome. Release of E2F1 leads to the ARF-mediated inhibition of MDM2 and causes TP53/p53 to accumulate because it is not targeted for degradation by MDM2-mediated ubiquitination anymore. This increase in TP53, in turn, would arrest the cell proliferation and direct its death but this effect is counteracted by the viral protein E1B-55K. Inactivation of the ability of RB1 to arrest the cell cycle is critical for cellular transformation, uncontrolled cellular growth and proliferation induced by viral infection. Interaction with RBX1 and CUL1 inhibits ubiquitination of the proteins targeted by SCF(FBXW7) ubiquitin ligase complex, and may be linked to unregulated host cell proliferation. The tumorigenesis-restraining activity of E1A may be related to the disruption of the host CtBP-CtIP complex through the CtBP binding motif. The protein is Early E1A protein of Canis lupus familiaris (Dog).